The chain runs to 253 residues: Triosephosphate isomerase, cytosolic (253 aa).

Substrate contacts are provided by asparagine 10 and lysine 12. Histidine 96 functions as the Electrophile in the catalytic mechanism. Glutamate 166 functions as the Proton acceptor in the catalytic mechanism.

The protein belongs to the triosephosphate isomerase family. In terms of assembly, homodimer.

The protein localises to the cytoplasm. The enzyme catalyses D-glyceraldehyde 3-phosphate = dihydroxyacetone phosphate. Its pathway is carbohydrate biosynthesis; gluconeogenesis. It participates in carbohydrate degradation; glycolysis; D-glyceraldehyde 3-phosphate from glycerone phosphate: step 1/1. In Zea mays (Maize), this protein is Triosephosphate isomerase, cytosolic.